The primary structure comprises 237 residues: Class B acid phosphatase (237 aa).

An N-terminal signal peptide occupies residues 1 to 23 (MKKITLALSAVCLLFTLNHSANA). Asp69 acts as the Nucleophile in catalysis. Asp69 and Asp71 together coordinate Mg(2+). The active-site Proton donor is Asp71. Substrate contacts are provided by residues 137–138 (TG) and Lys177. A Mg(2+)-binding site is contributed by Asp192.

This sequence belongs to the class B bacterial acid phosphatase family. In terms of assembly, homotetramer. Mg(2+) serves as cofactor.

It is found in the periplasm. The enzyme catalyses a phosphate monoester + H2O = an alcohol + phosphate. Functionally, dephosphorylates several organic phosphate monoesters. Also has a phosphotransferase activity catalyzing the transfer of low-energy phosphate groups from organic phosphate monoesters to free hydroxyl groups of various organic compounds. This Salmonella arizonae (strain ATCC BAA-731 / CDC346-86 / RSK2980) protein is Class B acid phosphatase.